The primary structure comprises 263 residues: MITVNTLQKMKAAGEKIAMLTAYESSFAALMDDAGVDVLLVGDSLGMAVQGRQSTLPVSLRDMCYHTECVARGAKNAMIVSDLPFGAYQQSKEQAFAAAAELMAAGAHMVKLEGGVWMAETTEFLQMRGIPVCAHIGLTPQSVFAFGGYKVQGRGGKAQALLNDAKAHDDAGAAVVLMECVPAELAKKVTESVSCPTIGIGAGVDCDGQVLVMHDMLGIFPGKTAKFVKNFMQGQSSIQAAVRAYVAEVKAKTFPAAEHIFAD.

Mg(2+) is bound by residues Asp43 and Asp82. 3-methyl-2-oxobutanoate-binding positions include 43 to 44 (DS), Asp82, and Lys111. Glu113 contacts Mg(2+). The Proton acceptor role is filled by Glu179.

Belongs to the PanB family. In terms of assembly, homodecamer; pentamer of dimers. Mg(2+) serves as cofactor.

It is found in the cytoplasm. It carries out the reaction 3-methyl-2-oxobutanoate + (6R)-5,10-methylene-5,6,7,8-tetrahydrofolate + H2O = 2-dehydropantoate + (6S)-5,6,7,8-tetrahydrofolate. It participates in cofactor biosynthesis; (R)-pantothenate biosynthesis; (R)-pantoate from 3-methyl-2-oxobutanoate: step 1/2. Functionally, catalyzes the reversible reaction in which hydroxymethyl group from 5,10-methylenetetrahydrofolate is transferred onto alpha-ketoisovalerate to form ketopantoate. The chain is 3-methyl-2-oxobutanoate hydroxymethyltransferase from Neisseria meningitidis serogroup A / serotype 4A (strain DSM 15465 / Z2491).